The chain runs to 210 residues: Insulin receptor (210 aa).

Residues 1–96 form the Fibronectin type-III domain; the sequence is VSNSSSQIIL…SQILKELEES (96 aa). Residues N3, N21, and N68 are each glycosylated (N-linked (GlcNAc...) asparagine). Residues 55–78 form a disordered region; it reads WSPPFESEDSQKHNQSEYEDSAGE. Positions 103-111 are insulin-binding; sequence EDYLHNVVF. The tract at residues 116-169 is disordered; the sequence is TSSGTGAEDPRPSRKRRSLGDVGNVTVAVPTVAAFPNTSSTSTPTSPEEHRPFE. The Extracellular segment spans residues 133–210; sequence SLGDVGNVTV…EERCSVAAYV (78 aa). Positions 137 to 161 are enriched in low complexity; the sequence is VGNVTVAVPTVAAFPNTSSTSTPTS. N139 and N152 each carry an N-linked (GlcNAc...) asparagine glycan. C195 and C204 are oxidised to a cystine.

This sequence belongs to the protein kinase superfamily. Tyr protein kinase family. Insulin receptor subfamily. In terms of assembly, tetramer of 2 alpha and 2 beta chains linked by disulfide bonds. The alpha chains carry the insulin-binding regions, while the beta chains carry the kinase domain. Forms a hybrid receptor with IGF1R, the hybrid is a tetramer consisting of 1 alpha chain and 1 beta chain of INSR and 1 alpha chain and 1 beta chain of IGF1R. Interacts with SORBS1 but dissociates from it following insulin stimulation. Binds SH2B2. Activated form of INSR interacts (via phosphorylated Tyrosine) with the PTB/PID domains of IRS1 and SHC1. The sequences surrounding the phosphorylated NPXY motif contribute differentially to either IRS1 or SHC1 recognition. Interacts (via tyrosines in the C-terminus) with IRS2 (via PTB domain and 591-786 AA); the 591-786 would be the primary anchor of IRS2 to INSR while the PTB domain would have a stabilizing action on the interaction with INSR. Interacts with the SH2 domains of the 85 kDa regulatory subunit of PI3K (PIK3R1) in vitro, when autophosphorylated on tyrosine residues. Interacts with SOCS7. Interacts with SOCS3. Interacts with SOCS1. Interacts with CAV2 (tyrosine-phosphorylated form); the interaction is increased with 'Tyr-27'phosphorylation of CAV2. Interacts with ARRB2. Interacts with GRB10; this interaction blocks the association between IRS1/IRS2 and INSR, significantly reduces insulin-stimulated tyrosine phosphorylation of IRS1 and IRS2 and thus decreases insulin signaling. Interacts with GRB7. Interacts with PDPK1. Interacts with GRB14 (via BPS domain). Interacts (via subunit alpha) with ENPP1 (via 485-599 AA); this interaction blocks autophosphorylation. Interacts with PTPRE. Interacts with STAT5B (via SH2 domain). Interacts with PTPRF. Interacts with ATIC; ATIC together with PRKAA2/AMPK2 and HACD3/PTPLAD1 is proposed to be part of a signaling netwok regulating INSR autophosphorylation and endocytosis. Interacts with the insulin receptor SORL1; this interaction strongly increases its surface exposure, hence strengthens insulin signal reception. Interacts (tyrosine phosphorylated) with CCDC88A/GIV (via SH2-like region); binding requires autophosphorylation of the INSR C-terminal region. Interacts with GNAI3; the interaction is probably mediated by CCDC88A/GIV. Interacts with LMBRD1. Interacts (in response to insulin stimulation) with NCK1; this interaction may recruit PTPN1 to mediate INSR dephosphorylation. After being transported from the endoplasmic reticulum to the Golgi apparatus, the single glycosylated precursor is further glycosylated and then cleaved, followed by its transport to the plasma membrane. In terms of processing, autophosphorylated on tyrosine residues in response to insulin. Dephosphorylated by PTPN1, PTPRE and PTPRF. Dephosphorylated by PTPN2; down-regulates insulin-induced signaling. Post-translationally, S-nitrosylation by BLVRB inhibits the receptor tyrosine kinase, thereby inhibiting insulin signaling.

It is found in the cell membrane. Its subcellular location is the late endosome. The protein localises to the lysosome. The enzyme catalyses L-tyrosyl-[protein] + ATP = O-phospho-L-tyrosyl-[protein] + ADP + H(+). Its activity is regulated as follows. Activated in response to insulin. Autophosphorylation activates the kinase activity. PTPN1, PTPRE and PTPRF dephosphorylate important tyrosine residues, thereby reducing INSR activity. Inhibited by ENPP1. GRB10 and GRB14 inhibit the catalytic activity of the INSR, they block access of substrates to the activated receptor. SOCS1 and SOCS3 act as negative regulators of INSR activity, they bind to the activated INRS and interfere with the phosphorylation of INSR substrates. Receptor tyrosine kinase which mediates the pleiotropic actions of insulin. Binding of insulin leads to phosphorylation of several intracellular substrates, including, insulin receptor substrates (IRS1, 2, 3, 4), SHC, GAB1, CBL and other signaling intermediates. Each of these phosphorylated proteins serve as docking proteins for other signaling proteins that contain Src-homology-2 domains (SH2 domain) that specifically recognize different phosphotyrosine residues, including the p85 regulatory subunit of PI3K and SHP2. Phosphorylation of IRSs proteins lead to the activation of two main signaling pathways: the PI3K-AKT/PKB pathway, which is responsible for most of the metabolic actions of insulin, and the Ras-MAPK pathway, which regulates expression of some genes and cooperates with the PI3K pathway to control cell growth and differentiation. Binding of the SH2 domains of PI3K to phosphotyrosines on IRS1 leads to the activation of PI3K and the generation of phosphatidylinositol-(3, 4, 5)-triphosphate (PIP3), a lipid second messenger, which activates several PIP3-dependent serine/threonine kinases, such as PDPK1 and subsequently AKT/PKB. The net effect of this pathway is to produce a translocation of the glucose transporter SLC2A4/GLUT4 from cytoplasmic vesicles to the cell membrane to facilitate glucose transport. Moreover, upon insulin stimulation, activated AKT/PKB is responsible for: anti-apoptotic effect of insulin by inducing phosphorylation of BAD; regulates the expression of gluconeogenic and lipogenic enzymes by controlling the activity of the winged helix or forkhead (FOX) class of transcription factors. Another pathway regulated by PI3K-AKT/PKB activation is mTORC1 signaling pathway which regulates cell growth and metabolism and integrates signals from insulin. AKT mediates insulin-stimulated protein synthesis by phosphorylating TSC2 thereby activating mTORC1 pathway. The Ras/RAF/MAP2K/MAPK pathway is mainly involved in mediating cell growth, survival and cellular differentiation of insulin. Phosphorylated IRS1 recruits GRB2/SOS complex, which triggers the activation of the Ras/RAF/MAP2K/MAPK pathway. In addition to binding insulin, the insulin receptor can bind insulin-like growth factors (IGFI and IGFII). When present in a hybrid receptor with IGF1R, binds IGF1. In adipocytes, inhibits lipolysis. The polypeptide is Insulin receptor (INSR) (Macaca mulatta (Rhesus macaque)).